Reading from the N-terminus, the 89-residue chain is Small ribosomal subunit protein uS14A (89 aa).

Belongs to the universal ribosomal protein uS14 family. In terms of assembly, part of the 30S ribosomal subunit. Contacts proteins S3 and S10.

Functionally, binds 16S rRNA, required for the assembly of 30S particles and may also be responsible for determining the conformation of the 16S rRNA at the A site. This Lacticaseibacillus paracasei (strain ATCC 334 / BCRC 17002 / CCUG 31169 / CIP 107868 / KCTC 3260 / NRRL B-441) (Lactobacillus paracasei) protein is Small ribosomal subunit protein uS14A.